The sequence spans 905 residues: Protein translocase subunit SecA (905 aa).

ATP contacts are provided by residues glutamine 87, 105–109 (GEGKT), and aspartate 512. The tract at residues 840-905 (AQRQQEAMAQ…HCHGSKARYA (66 aa)) is disordered. Low complexity predominate over residues 843–852 (QQEAMAQAES). Basic and acidic residues predominate over residues 853–862 (ENYRTADHQA). Polar residues predominate over residues 863–874 (EAQQSESLTEEQ). The Zn(2+) site is built by cysteine 886, cysteine 888, cysteine 897, and histidine 898. Residues 892 to 905 (KKYKHCHGSKARYA) show a composition bias toward basic residues.

It belongs to the SecA family. In terms of assembly, monomer and homodimer. Part of the essential Sec protein translocation apparatus which comprises SecA, SecYEG and auxiliary proteins SecDF-YajC and YidC. Zn(2+) serves as cofactor.

The protein resides in the cell inner membrane. It is found in the cytoplasm. The catalysed reaction is ATP + H2O + cellular proteinSide 1 = ADP + phosphate + cellular proteinSide 2.. Its function is as follows. Part of the Sec protein translocase complex. Interacts with the SecYEG preprotein conducting channel. Has a central role in coupling the hydrolysis of ATP to the transfer of proteins into and across the cell membrane, serving both as a receptor for the preprotein-SecB complex and as an ATP-driven molecular motor driving the stepwise translocation of polypeptide chains across the membrane. In Actinobacillus pleuropneumoniae serotype 3 (strain JL03), this protein is Protein translocase subunit SecA.